A 258-amino-acid chain; its full sequence is tRNA pseudouridine synthase A (258 aa).

Asp-53 acts as the Nucleophile in catalysis. Substrate is bound at residue Tyr-111.

This sequence belongs to the tRNA pseudouridine synthase TruA family. As to quaternary structure, homodimer.

It catalyses the reaction uridine(38/39/40) in tRNA = pseudouridine(38/39/40) in tRNA. Formation of pseudouridine at positions 38, 39 and 40 in the anticodon stem and loop of transfer RNAs. This is tRNA pseudouridine synthase A from Streptococcus agalactiae serotype III (strain NEM316).